The primary structure comprises 258 residues: uncharacterized protein (258 aa).

Positions 40–54 are enriched in polar residues; that stretch reads AQKTDTPLDSSSYAV. The interval 40–63 is disordered; it reads AQKTDTPLDSSSYAVTSPEEAPNE.

This is an uncharacterized protein from Treponema pallidum (strain Nichols).